We begin with the raw amino-acid sequence, 241 residues long: Probable 2-phosphosulfolactate phosphatase (241 aa).

Belongs to the ComB family. The cofactor is Mg(2+).

It carries out the reaction (2R)-O-phospho-3-sulfolactate + H2O = (2R)-3-sulfolactate + phosphate. The sequence is that of Probable 2-phosphosulfolactate phosphatase from Caldanaerobacter subterraneus subsp. tengcongensis (strain DSM 15242 / JCM 11007 / NBRC 100824 / MB4) (Thermoanaerobacter tengcongensis).